Consider the following 183-residue polypeptide: ATP synthase subunit b, chloroplastic (183 aa).

A helical membrane pass occupies residues 27–49 (LATNLINLTVVVGVLIFFGKGVL).

It belongs to the ATPase B chain family. As to quaternary structure, F-type ATPases have 2 components, F(1) - the catalytic core - and F(0) - the membrane proton channel. F(1) has five subunits: alpha(3), beta(3), gamma(1), delta(1), epsilon(1). F(0) has four main subunits: a(1), b(1), b'(1) and c(10-14). The alpha and beta chains form an alternating ring which encloses part of the gamma chain. F(1) is attached to F(0) by a central stalk formed by the gamma and epsilon chains, while a peripheral stalk is formed by the delta, b and b' chains.

The protein resides in the plastid. Its subcellular location is the chloroplast thylakoid membrane. F(1)F(0) ATP synthase produces ATP from ADP in the presence of a proton or sodium gradient. F-type ATPases consist of two structural domains, F(1) containing the extramembraneous catalytic core and F(0) containing the membrane proton channel, linked together by a central stalk and a peripheral stalk. During catalysis, ATP synthesis in the catalytic domain of F(1) is coupled via a rotary mechanism of the central stalk subunits to proton translocation. Functionally, component of the F(0) channel, it forms part of the peripheral stalk, linking F(1) to F(0). This chain is ATP synthase subunit b, chloroplastic, found in Hordeum vulgare (Barley).